A 260-amino-acid chain; its full sequence is Ubiquinone/menaquinone biosynthesis C-methyltransferase UbiE (260 aa).

S-adenosyl-L-methionine is bound by residues Thr-83, Asp-104, and 132 to 133 (NA).

Belongs to the class I-like SAM-binding methyltransferase superfamily. MenG/UbiE family.

The enzyme catalyses a 2-demethylmenaquinol + S-adenosyl-L-methionine = a menaquinol + S-adenosyl-L-homocysteine + H(+). The catalysed reaction is a 2-methoxy-6-(all-trans-polyprenyl)benzene-1,4-diol + S-adenosyl-L-methionine = a 5-methoxy-2-methyl-3-(all-trans-polyprenyl)benzene-1,4-diol + S-adenosyl-L-homocysteine + H(+). The protein operates within quinol/quinone metabolism; menaquinone biosynthesis; menaquinol from 1,4-dihydroxy-2-naphthoate: step 2/2. It participates in cofactor biosynthesis; ubiquinone biosynthesis. Its function is as follows. Methyltransferase required for the conversion of demethylmenaquinol (DMKH2) to menaquinol (MKH2) and the conversion of 2-polyprenyl-6-methoxy-1,4-benzoquinol (DDMQH2) to 2-polyprenyl-3-methyl-6-methoxy-1,4-benzoquinol (DMQH2). This Bartonella tribocorum (strain CIP 105476 / IBS 506) protein is Ubiquinone/menaquinone biosynthesis C-methyltransferase UbiE.